The chain runs to 314 residues: Deoxymugineic acid synthase 1 (314 aa).

Residues 1–21 (MGAGDRTVAGMPRIGMGTAVQ) are disordered. Asp44 provides a ligand contact to NADP(+). Tyr49 (proton donor) is an active-site residue. His112 contacts substrate. Residues 158–159 (AN), Gln180, 258–266 (FDEARMREN), and 273–281 (ELTEEERRR) each bind NADP(+).

The protein belongs to the aldo/keto reductase family.

It carries out the reaction 2'-deoxymugineate + NAD(+) = 3''-deamino-3''-oxonicotianamine + NADH + H(+). The catalysed reaction is 2'-deoxymugineate + NADP(+) = 3''-deamino-3''-oxonicotianamine + NADPH + H(+). It participates in siderophore biosynthesis. Its function is as follows. Catalyzes the reduction of a 3''-keto intermediate during the biosynthesis of 2'-deoxymugineic acid (DMA) from L-Met. Involved in the formation of phytosiderophores (MAs) belonging to the mugineic acid family and required to acquire iron. The polypeptide is Deoxymugineic acid synthase 1 (Hordeum vulgare (Barley)).